Here is a 778-residue protein sequence, read N- to C-terminus: Serine/threonine-protein kinase BRSK1 (778 aa).

A compositionally biased stretch (gly residues) spans 1-12 (MSSGSKEGGGGS). The tract at residues 1-29 (MSSGSKEGGGGSPAYHLPHPHPHPPQHAQ) is disordered. The region spanning 34–285 (YRLEKTLGKG…LEQIQKHPWY (252 aa)) is the Protein kinase domain. ATP is bound by residues 40–48 (LGKGQTGLV) and lysine 63. Aspartate 156 acts as the Proton acceptor in catalysis. Phosphothreonine; by LKB1 is present on threonine 189. The UBA domain occupies 314–356 (ELDPDVLESMASLGCFRDRERLHRELRSEEENQEKMIYYLLLD). Positions 362-383 (PSCEDQDLPPRNDVDPPRKRVD) are enriched in basic and acidic residues. The tract at residues 362–548 (PSCEDQDLPP…SPGGGVGGAA (187 aa)) is disordered. Residues serine 399, serine 443, serine 447, and serine 450 each carry the phosphoserine modification. Over residues 430–457 (SRSVSGASTGLSSSPLSSPRSPVFSFSP) the composition is skewed to low complexity. Omega-N-methylarginine occurs at positions 466, 481, 484, and 498. Residues 491 to 508 (QPPPPSARSTPLPGPPGS) show a composition bias toward pro residues. Serine 508 carries the phosphoserine modification. Over residues 509-533 (PRSSGGTPLHSPLHTPRASPTGTPG) the composition is skewed to low complexity. An Omega-N-methylarginine modification is found at arginine 525. Threonine 529 and threonine 535 each carry phosphothreonine. Arginine 550 carries the omega-N-methylarginine modification. The tract at residues 560 to 588 (FLGSPRFHRRKMQVPTAEEMSSLTPESSP) is disordered. A Phosphothreonine modification is found at threonine 583. Residues serine 586, serine 587, and serine 601 each carry the phosphoserine modification. The segment at 719–778 (QPSVQALADEKNGAQTRPAGTPPRSLQPPPGRSDPDLSSSPRRGPPKDKKLLATNGTPLP) is disordered.

Belongs to the protein kinase superfamily. CAMK Ser/Thr protein kinase family. SNF1 subfamily. Mg(2+) serves as cofactor. Post-translationally, phosphorylated at Thr-189 by STK11/LKB1 in complex with STE20-related adapter-alpha (STRADA) pseudo kinase and CAB39. Not phosphorylated at Thr-189 by CaMKK2. In contrast, it is phosphorylated and activated by CaMKK1. May be inactivated via dephosphorylation of Thr-189 by PP2C. Present in the gray matter of the brain and spinal cord (at protein level). Expressed in the nervous system, distributed within the brain and spinal cord of embryonic and postnatal animals.

It localises to the cytoplasm. It is found in the nucleus. The protein resides in the cytoskeleton. Its subcellular location is the microtubule organizing center. The protein localises to the centrosome. It localises to the synapse. It is found in the presynaptic active zone. The protein resides in the cytoplasmic vesicle. Its subcellular location is the secretory vesicle. The protein localises to the synaptic vesicle. The enzyme catalyses L-seryl-[protein] + ATP = O-phospho-L-seryl-[protein] + ADP + H(+). It carries out the reaction L-threonyl-[protein] + ATP = O-phospho-L-threonyl-[protein] + ADP + H(+). It catalyses the reaction L-seryl-[tau protein] + ATP = O-phospho-L-seryl-[tau protein] + ADP + H(+). The catalysed reaction is L-threonyl-[tau protein] + ATP = O-phospho-L-threonyl-[tau protein] + ADP + H(+). Its activity is regulated as follows. Activated by phosphorylation on Thr-189 by STK11/LKB1. In terms of biological role, serine/threonine-protein kinase that plays a key role in polarization of neurons and centrosome duplication. Phosphorylates CDC25B, CDC25C, MAPT/TAU, RIMS1, TUBG1, TUBG2 and WEE1. Following phosphorylation and activation by STK11/LKB1, acts as a key regulator of polarization of cortical neurons, probably by mediating phosphorylation of microtubule-associated proteins such as MAPT/TAU at 'Thr-504' and 'Ser-554'. Also regulates neuron polarization by mediating phosphorylation of WEE1 at 'Ser-642' in postmitotic neurons, leading to down-regulate WEE1 activity in polarized neurons. In neurons, localizes to synaptic vesicles and plays a role in neurotransmitter release, possibly by phosphorylating RIMS1. Also acts as a positive regulator of centrosome duplication by mediating phosphorylation of gamma-tubulin (TUBG1 and TUBG2) at 'Ser-131', leading to translocation of gamma-tubulin and its associated proteins to the centrosome. Involved in the UV-induced DNA damage checkpoint response, probably by inhibiting CDK1 activity through phosphorylation and activation of WEE1, and inhibition of CDC25B and CDC25C. This Mus musculus (Mouse) protein is Serine/threonine-protein kinase BRSK1 (Brsk1).